The chain runs to 218 residues: Small ribosomal subunit protein uS3 (218 aa).

The residue at position 1 (Met1) is an N-acetylmethionine. The KH type-2 domain maps to 23–95; the sequence is LNELFTREFN…TVVLFAEKIL (73 aa).

Belongs to the universal ribosomal protein uS3 family.

The polypeptide is Small ribosomal subunit protein uS3 (rps3) (Dictyostelium discoideum (Social amoeba)).